The sequence spans 586 residues: Asparagine synthetase [glutamine-hydrolyzing] 2 (586 aa).

C2 (for GATase activity) is an active-site residue. The 184-residue stretch at 2–185 (CGILAVLGCS…PGHLYSSKEK (184 aa)) folds into the Glutamine amidotransferase type-2 domain. L-glutamine-binding positions include 50-54 (RLAIV), 75-77 (NGE), and D98. The Asparagine synthetase domain occupies 193–516 (PPWFSEAIPS…PQNSARLSVP (324 aa)). ATP-binding positions include L231, V267, and 341–342 (SG).

The catalysed reaction is L-aspartate + L-glutamine + ATP + H2O = L-asparagine + L-glutamate + AMP + diphosphate + H(+). It participates in amino-acid biosynthesis; L-asparagine biosynthesis; L-asparagine from L-aspartate (L-Gln route): step 1/1. This Lotus japonicus (Lotus corniculatus var. japonicus) protein is Asparagine synthetase [glutamine-hydrolyzing] 2 (AS2).